Consider the following 161-residue polypeptide: Nucleotide-binding protein PFL_4775 (161 aa).

It belongs to the YajQ family.

Nucleotide-binding protein. This is Nucleotide-binding protein PFL_4775 from Pseudomonas fluorescens (strain ATCC BAA-477 / NRRL B-23932 / Pf-5).